A 471-amino-acid chain; its full sequence is ATP synthase subunit beta 1 (471 aa).

ATP is bound at residue Gly157–Thr164.

It belongs to the ATPase alpha/beta chains family. F-type ATPases have 2 components, CF(1) - the catalytic core - and CF(0) - the membrane proton channel. CF(1) has five subunits: alpha(3), beta(3), gamma(1), delta(1), epsilon(1). CF(0) has three main subunits: a(1), b(2) and c(9-12). The alpha and beta chains form an alternating ring which encloses part of the gamma chain. CF(1) is attached to CF(0) by a central stalk formed by the gamma and epsilon chains, while a peripheral stalk is formed by the delta and b chains.

It localises to the cell inner membrane. It catalyses the reaction ATP + H2O + 4 H(+)(in) = ADP + phosphate + 5 H(+)(out). Functionally, produces ATP from ADP in the presence of a proton gradient across the membrane. The catalytic sites are hosted primarily by the beta subunits. In Pelobacter propionicus (strain DSM 2379 / NBRC 103807 / OttBd1), this protein is ATP synthase subunit beta 1.